The sequence spans 1190 residues: Pyruvate-flavodoxin oxidoreductase (1190 aa).

4Fe-4S ferredoxin-type domains follow at residues 687–716 (EIPV…SKVY) and 743–773 (FTIQ…PRKK). Positions 696, 699, 702, 706, 752, 755, 758, 762, 826, 829, 854, and 1089 each coordinate [4Fe-4S] cluster.

The protein belongs to the pyruvate:ferredoxin/flavodoxin oxidoreductase family. Requires [4Fe-4S] cluster as cofactor.

It carries out the reaction oxidized [flavodoxin] + pyruvate + CoA + 2 H(+) = reduced [flavodoxin] + acetyl-CoA + CO2. In terms of biological role, oxidoreductase required for the transfer of electrons from pyruvate to flavodoxin, which reduces nitrogenase. The polypeptide is Pyruvate-flavodoxin oxidoreductase (nifJ) (Trichormus variabilis (strain ATCC 29413 / PCC 7937) (Anabaena variabilis)).